A 2023-amino-acid chain; its full sequence is Protein Daple (2023 aa).

The region spanning Asn11–Ala131 is the Calponin-homology (CH) domain. 3 coiled-coil regions span residues Arg250–Glu415, Asn458–Asn1064, and Leu1105–Phe1419. The tract at residues Arg1013–Pro1035 is disordered. A compositionally biased stretch (polar residues) spans Glu1022 to Ser1033. Disordered regions lie at residues Lys1441 to Ser1824 and Leu1837 to Val2023. The span at Pro1442–Ser1460 shows a compositional bias: basic and acidic residues. Residues Ser1478 to Gln1491 are compositionally biased toward pro residues. 2 stretches are compositionally biased toward polar residues: residues Asp1497–Ala1518 and Thr1564–Leu1585. Composition is skewed to low complexity over residues Ser1623–Leu1643 and Arg1667–Ser1704. A GBA motif is present at residues Ser1700 to Ser1728. Composition is skewed to polar residues over residues Gln1714–Gly1727, Thr1752–Thr1763, Leu1785–Pro1799, and Ala1809–Ser1824. Residues Val1890–Phe1904 show a composition bias toward basic and acidic residues. Residues Gly1927–Gly1945 are compositionally biased toward low complexity. A compositionally biased stretch (basic and acidic residues) spans Gln1974 to Asp1988. Positions Thr1989–Gln2014 are enriched in polar residues. The PDZ-binding signature appears at Tyr2020–Val2023.

It belongs to the CCDC88 family.

It is found in the cytoplasm. It localises to the cell junction. Functionally, positive regulator of Wnt signaling, acting synergistically with dvl2. Functions upstream of ctnnb1/beta-catenin in the canonical Wnt pathway, and also activates jnk in the Wnt/planar cell polarity (PCP) pathway. Acts as a non-receptor guanine nucleotide exchange factor which binds to and activates guanine nucleotide-binding protein G(i) alpha (Gi-alpha) subunits. This promotes apical cell constriction and subsequent bending of the neural plate during neurulation via arhgef18. This chain is Protein Daple, found in Danio rerio (Zebrafish).